The sequence spans 182 residues: MRGTEWREARDRVAEMFRKAGIALTPSELEKVEVADFGLGNLAVQGLQLVTYINTDRYCAKELALFPHQTCPEHLHPPVGGDPGKMETFRCRWGKVFLYVEGEPAASVQAAVPPGSEAYYTVFHEIVLTPGEQYTIPPGTKHWFQGGPEGAIVSEFSSTSRDEFDIFTDPKVERMPVIEFDD.

4 residues coordinate Mn(2+): His-74, His-76, Glu-87, and His-142.

It belongs to the D-lyxose ketol-isomerase family. As to quaternary structure, homodimer. Mn(2+) is required as a cofactor.

It carries out the reaction D-lyxose = D-xylulose. In terms of biological role, sugar isomerase that catalyzes the reversible isomerization of D-lyxose to D-xylulose. Shows weak activity with D-mannose and L-ribose. This Cohnella laeviribosi protein is D-lyxose ketol-isomerase.